The chain runs to 92 residues: Putative septation protein SpoVG (92 aa).

This sequence belongs to the SpoVG family.

Functionally, could be involved in septation. In Clostridioides difficile (strain 630) (Peptoclostridium difficile), this protein is Putative septation protein SpoVG.